Reading from the N-terminus, the 93-residue chain is MPRSLKKGPFVDGHLQKKVDDQNTKGTKNVIKTWSRRSLITPDFLGHTFAVHDGRKHVPVFVTEAMVGHKLGEFAPTRTYRGHDKDDRKARRR.

Disordered stretches follow at residues Met-1 to Lys-25 and Phe-74 to Arg-93. Basic and acidic residues-rich tracts occupy residues His-14–Asn-23 and Arg-81–Arg-93.

It belongs to the universal ribosomal protein uS19 family.

In terms of biological role, protein S19 forms a complex with S13 that binds strongly to the 16S ribosomal RNA. The polypeptide is Small ribosomal subunit protein uS19 (Beutenbergia cavernae (strain ATCC BAA-8 / DSM 12333 / CCUG 43141 / JCM 11478 / NBRC 16432 / NCIMB 13614 / HKI 0122)).